The chain runs to 203 residues: Protein GrpE (203 aa).

Positions 1–10 (MSNESIKAEQ) are enriched in basic and acidic residues. A disordered region spans residues 1–20 (MSNESIKAEQDLIQEGVESE).

Belongs to the GrpE family. Homodimer.

It localises to the cytoplasm. In terms of biological role, participates actively in the response to hyperosmotic and heat shock by preventing the aggregation of stress-denatured proteins, in association with DnaK and GrpE. It is the nucleotide exchange factor for DnaK and may function as a thermosensor. Unfolded proteins bind initially to DnaJ; upon interaction with the DnaJ-bound protein, DnaK hydrolyzes its bound ATP, resulting in the formation of a stable complex. GrpE releases ADP from DnaK; ATP binding to DnaK triggers the release of the substrate protein, thus completing the reaction cycle. Several rounds of ATP-dependent interactions between DnaJ, DnaK and GrpE are required for fully efficient folding. This chain is Protein GrpE, found in Shewanella sp. (strain MR-7).